The chain runs to 484 residues: MTATFAGIDATKHLIGGQWVEGNSDRISTNINPYDDSVIAESKQASIADVDAAYEAAKKAQAEWAATPAAERSAIIYRAAELLEEHREEIVEWLIKESGSTRSKANLEITLAGNITKESASFPGRVHGRISPSNTPGKENRVYRVAKGVVGVISPWNFPLNLSIRSVAPALAVGNAVVIKPASDTPVTGGVIPARIFEEAGVPAGVISTVAGAGSEIGDHFVTHAVPKLISFTGSTPVGRRVGELAINGGPMKTVALELGGNAPFVVLADADIDAAAQAAAVGAFLHQGQICMSINRVIVDAAVHDEFLEKFVEAVKNIPTGDPSAEGTLVGPVINDSQLSGLKEKIELAKKEGATVQVEGPIEGRLVHPHVFSDVTSDMEIAREEIFGPLISVLKADDEAHAAELANASDFGLSAAVWSKDIDRAAQFALQIDSGMVHINDLTVNDEPHVMFGGSKNSGLGRFNGDWAIEEFTTDRWIGIKRS.

Residues 156–157 (WN), 180–183 (KPAS), and 234–235 (GS) each bind NADP(+). Residues Lys-180 and 234–239 (GSTPVG) contribute to the NAD(+) site. The Proton acceptor role is filled by Glu-258. An NADP(+)-binding site is contributed by Leu-259. Residue Cys-292 is the Nucleophile of the active site. Residues Gln-339 and Glu-386 each coordinate NAD(+). Glu-386 is a binding site for NADP(+).

It belongs to the aldehyde dehydrogenase family. In terms of assembly, exists as a homodimer, homotrimer and homotetramer.

It carries out the reaction vanillin + NAD(+) + H2O = vanillate + NADH + 2 H(+). It catalyses the reaction vanillin + NADP(+) + H2O = vanillate + NADPH + 2 H(+). The enzyme catalyses 3,4-dihydroxybenzaldehyde + NAD(+) + H2O = 3,4-dihydroxybenzoate + NADH + 2 H(+). The catalysed reaction is 3,4-dihydroxybenzaldehyde + NADP(+) + H2O = 3,4-dihydroxybenzoate + NADPH + 2 H(+). It carries out the reaction 4-hydroxybenzaldehyde + NAD(+) + H2O = 4-hydroxybenzoate + NADH + 2 H(+). It catalyses the reaction 4-hydroxybenzaldehyde + NADP(+) + H2O = 4-hydroxybenzoate + NADPH + 2 H(+). In terms of biological role, catalyzes oxidation of vanillin to vanillate. Also oxidizes 3,4-dihydroxybenzaldehyde and 4-hydroxybenzaldehyde significantly. Other aromatic aldehyde substrates in the order of decreasing activity include 3-hydroxybenzaldehyde, 4-nitrobenzaldehyde, terephthalaldehyde, 2,4-dichlorobenzaldehyde, benzaldehyde and 3-phenylpropanal. Low activity with phthalaldehyde, cinnamaldehyde and syringaldehyde. No activity with phenylacetaldehyde, formaldehyde or aldehyde. Active with both NAD(+) and NADP(+). Involved in the degradation pathway of lignin-derived aromatic compounds of plant cell walls. Catalyzes the conversion of vanillin to vanillate due to toxicity of vanillin to the cells. The protein is Vanillin dehydrogenase of Corynebacterium glutamicum (strain ATCC 13032 / DSM 20300 / JCM 1318 / BCRC 11384 / CCUG 27702 / LMG 3730 / NBRC 12168 / NCIMB 10025 / NRRL B-2784 / 534).